Consider the following 147-residue polypeptide: Protein-export protein SecB (147 aa).

The protein belongs to the SecB family. As to quaternary structure, homotetramer, a dimer of dimers. One homotetramer interacts with 1 SecA dimer.

It localises to the cytoplasm. Functionally, one of the proteins required for the normal export of preproteins out of the cell cytoplasm. It is a molecular chaperone that binds to a subset of precursor proteins, maintaining them in a translocation-competent state. It also specifically binds to its receptor SecA. The chain is Protein-export protein SecB from Neisseria meningitidis serogroup A / serotype 4A (strain DSM 15465 / Z2491).